The sequence spans 269 residues: MDKYAVWGNPIAQSKSPQIHQIFANQTQQQMEYVAMLGDEQDFEQQLRVFFEKGAKGCNITAPFKERAFQLADLHSERCLTAEACNTLKKLDDGRLYGDNTDGAGLVSDLQRLGWLKPEQTILILGAGGATKGVLLPLLQAKQHIVLANRTLSKAEDLAQKFAQYGQIQAVELDNIPVQSFDLIINATSSGLHGQTVQMNPEILQNATALYDMQYAKQADTPFVALCKQLGKQNVSDGFGMLVAQAAHAFHLWRGVMPEFEALLEQEWL.

Shikimate is bound by residues Ser14–Ser16 and Thr61. Lys65 functions as the Proton acceptor in the catalytic mechanism. Glu77 contributes to the NADP(+) binding site. 2 residues coordinate shikimate: Asn86 and Asp102. NADP(+) contacts are provided by residues Gly126–Ala130, Asn149–Lys154, and Met213. A shikimate-binding site is contributed by Tyr215. Residue Gly238 participates in NADP(+) binding.

It belongs to the shikimate dehydrogenase family. In terms of assembly, homodimer.

It catalyses the reaction shikimate + NADP(+) = 3-dehydroshikimate + NADPH + H(+). It participates in metabolic intermediate biosynthesis; chorismate biosynthesis; chorismate from D-erythrose 4-phosphate and phosphoenolpyruvate: step 4/7. Its function is as follows. Involved in the biosynthesis of the chorismate, which leads to the biosynthesis of aromatic amino acids. Catalyzes the reversible NADPH linked reduction of 3-dehydroshikimate (DHSA) to yield shikimate (SA). The polypeptide is Shikimate dehydrogenase (NADP(+)) (Pasteurella multocida (strain Pm70)).